A 179-amino-acid polypeptide reads, in one-letter code: ATP-dependent protease subunit HslV (179 aa).

Threonine 7 is a catalytic residue. Positions 162, 165, and 168 each coordinate Na(+).

Belongs to the peptidase T1B family. HslV subfamily. In terms of assembly, a double ring-shaped homohexamer of HslV is capped on each side by a ring-shaped HslU homohexamer. The assembly of the HslU/HslV complex is dependent on binding of ATP.

Its subcellular location is the cytoplasm. The enzyme catalyses ATP-dependent cleavage of peptide bonds with broad specificity.. Its activity is regulated as follows. Allosterically activated by HslU binding. Its function is as follows. Protease subunit of a proteasome-like degradation complex believed to be a general protein degrading machinery. In Bordetella bronchiseptica (strain ATCC BAA-588 / NCTC 13252 / RB50) (Alcaligenes bronchisepticus), this protein is ATP-dependent protease subunit HslV.